The sequence spans 268 residues: Pantothenate synthetase (268 aa).

18–25 (MGYLHEGH) contacts ATP. His25 acts as the Proton donor in catalysis. Gln49 contacts (R)-pantoate. Gln49 contributes to the beta-alanine binding site. Residue 135–138 (GQKD) coordinates ATP. Gln141 provides a ligand contact to (R)-pantoate. Residues Val164 and 172 to 175 (LSSR) contribute to the ATP site.

It belongs to the pantothenate synthetase family. In terms of assembly, homodimer.

It is found in the cytoplasm. It catalyses the reaction (R)-pantoate + beta-alanine + ATP = (R)-pantothenate + AMP + diphosphate + H(+). The protein operates within cofactor biosynthesis; (R)-pantothenate biosynthesis; (R)-pantothenate from (R)-pantoate and beta-alanine: step 1/1. Catalyzes the condensation of pantoate with beta-alanine in an ATP-dependent reaction via a pantoyl-adenylate intermediate. The chain is Pantothenate synthetase from Dehalococcoides mccartyi (strain ATCC BAA-2266 / KCTC 15142 / 195) (Dehalococcoides ethenogenes (strain 195)).